A 246-amino-acid chain; its full sequence is Octanoyltransferase (246 aa).

The BPL/LPL catalytic domain occupies 30 to 227 (GRIGNTLLLL…QFGRVFGHQV (198 aa)). Residues 75-82 (RGGDVTYH), 155-157 (AIG), and 168-170 (GFA) each bind substrate. The active-site Acyl-thioester intermediate is the C186.

This sequence belongs to the LipB family.

The protein resides in the cytoplasm. The enzyme catalyses octanoyl-[ACP] + L-lysyl-[protein] = N(6)-octanoyl-L-lysyl-[protein] + holo-[ACP] + H(+). It functions in the pathway protein modification; protein lipoylation via endogenous pathway; protein N(6)-(lipoyl)lysine from octanoyl-[acyl-carrier-protein]: step 1/2. In terms of biological role, catalyzes the transfer of endogenously produced octanoic acid from octanoyl-acyl-carrier-protein onto the lipoyl domains of lipoate-dependent enzymes. Lipoyl-ACP can also act as a substrate although octanoyl-ACP is likely to be the physiological substrate. The protein is Octanoyltransferase of Acidobacterium capsulatum (strain ATCC 51196 / DSM 11244 / BCRC 80197 / JCM 7670 / NBRC 15755 / NCIMB 13165 / 161).